The primary structure comprises 497 residues: MSCVLGGVIPLGLLFLVCGSQGYLLPNVTLLEELLSKYQHNESHSRVRRAIPREDKEEILMLHNKLRGQVQPQASNMEYMTWDDELEKSAAAWASQCIWEHGPTSLLVSIGQNLGAHWGRYRSPGFHVQSWYDEVKDYTYPYPSECNPWCPERCSGPMCTHYTQIVWATTNKIGCAVNTCRKMTVWGEVWENAVYFVCNYSPKGNWIGEAPYKNGRPCSECPPSYGGSCRNNLCYREETYTPKPETDEMNEVETAPIPEENHVWLQPRVMRPTKPKKTSAVNYMTQVVRCDTKMKDRCKGSTCNRYQCPAGCLNHKAKIFGTLFYESSSSICRAAIHYGILDDKGGLVDITRNGKVPFFVKSERHGVQSLSKYKPSSSFMVSKVKVQDLDCYTTVAQLCPFEKPATHCPRIHCPAHCKDEPSYWAPVFGTNIYADTSSICKTAVHAGVISNESGGDVDVMPVDKKKTYVGSLRNGVQSESLGTPRDGKAFRIFAVRQ.

A signal peptide spans 1–22 (MSCVLGGVIPLGLLFLVCGSQG). The N-linked (GlcNAc...) asparagine glycan is linked to Asn27. An SCP domain is found at 62-200 (LHNKLRGQVQ…ENAVYFVCNY (139 aa)). 2 LCCL domains span residues 284–379 (MTQV…SSSF) and 385–488 (KVQD…RDGK). 4 disulfide bridges follow: Cys290-Cys308, Cys312-Cys332, Cys391-Cys413, and Cys417-Cys440.

Belongs to the CRISP family. Binds to heparin, dermatan sulfate and chondroitin sulfate.

The protein localises to the secreted. Functionally, promotes matrix assembly. The polypeptide is Cysteine-rich secretory protein LCCL domain-containing 2 (CRISPLD2) (Homo sapiens (Human)).